The following is a 312-amino-acid chain: Aspartate carbamoyltransferase catalytic subunit (312 aa).

R55 and T56 together coordinate carbamoyl phosphate. K83 lines the L-aspartate pocket. Carbamoyl phosphate is bound by residues R105, H138, and Q141. R171 and R225 together coordinate L-aspartate. G266 and P267 together coordinate carbamoyl phosphate.

This sequence belongs to the aspartate/ornithine carbamoyltransferase superfamily. ATCase family. Heterododecamer (2C3:3R2) of six catalytic PyrB chains organized as two trimers (C3), and six regulatory PyrI chains organized as three dimers (R2).

It carries out the reaction carbamoyl phosphate + L-aspartate = N-carbamoyl-L-aspartate + phosphate + H(+). It functions in the pathway pyrimidine metabolism; UMP biosynthesis via de novo pathway; (S)-dihydroorotate from bicarbonate: step 2/3. Catalyzes the condensation of carbamoyl phosphate and aspartate to form carbamoyl aspartate and inorganic phosphate, the committed step in the de novo pyrimidine nucleotide biosynthesis pathway. The sequence is that of Aspartate carbamoyltransferase catalytic subunit from Corynebacterium glutamicum (strain ATCC 13032 / DSM 20300 / JCM 1318 / BCRC 11384 / CCUG 27702 / LMG 3730 / NBRC 12168 / NCIMB 10025 / NRRL B-2784 / 534).